Reading from the N-terminus, the 74-residue chain is Conotoxin TsMLCL-04 (74 aa).

An N-terminal signal peptide occupies residues 1 to 19; that stretch reads MLCLPVFIILLLLASPAAP. Positions 20 to 60 are excised as a propeptide; that stretch reads NPLETRIQRDLIRAALEDADMKTNERFLEGVISTIKDFAGK.

The protein belongs to the conotoxin T superfamily. In terms of processing, contains 2 disulfide bonds that can be either 'C1-C3, C2-C4' or 'C1-C4, C2-C3', since these disulfide connectivities have been observed for conotoxins with cysteine framework V (for examples, see AC P0DQQ7 and AC P81755). In terms of tissue distribution, expressed by the venom duct.

Its subcellular location is the secreted. The protein is Conotoxin TsMLCL-04 of Conus tessulatus (Tessellate cone).